The following is a 937-amino-acid chain: Alanine--tRNA ligase (937 aa).

4 residues coordinate Zn(2+): histidine 626, histidine 630, cysteine 727, and histidine 731.

The protein belongs to the class-II aminoacyl-tRNA synthetase family. Zn(2+) serves as cofactor.

It localises to the cytoplasm. The enzyme catalyses tRNA(Ala) + L-alanine + ATP = L-alanyl-tRNA(Ala) + AMP + diphosphate. Functionally, catalyzes the attachment of alanine to tRNA(Ala) in a two-step reaction: alanine is first activated by ATP to form Ala-AMP and then transferred to the acceptor end of tRNA(Ala). Also edits incorrectly charged Ser-tRNA(Ala) and Gly-tRNA(Ala) via its editing domain. The chain is Alanine--tRNA ligase from Opitutus terrae (strain DSM 11246 / JCM 15787 / PB90-1).